A 369-amino-acid chain; its full sequence is Trichocyst matrix protein T1-B (369 aa).

A signal peptide spans 1 to 16 (MYKLAVCTLLILSVTA). Positions 17 to 55 (IDVTNSVWTSHDQKAFAQIKQSGWGNFILNFGELHLQTG) are excised as a propeptide. Residues 56–180 (GILAELNTEI…AIDESLQLLS (125 aa)) are a coiled coil. Residues 190–225 (IQKVQKNLTKIQQSLKRHSTFQTFIKTLLEIAVEAN) constitute a propeptide that is removed on maturation. Positions 262 to 354 (KDFEARVIQL…AHQALDLLNQ (93 aa)) form a coiled coil.

This sequence belongs to the TMP family. Post-translationally, two components are produced by post-translational processing from the precursor peptide.

It is found in the trichocyst. In terms of biological role, structural protein that crystallize inside the trichocyst matrix. The protein is Trichocyst matrix protein T1-B (T1B) of Paramecium tetraurelia.